The chain runs to 1165 residues: Symplekin (1165 aa).

HEAT repeat units lie at residues Thr-23 to Gly-58, Ala-61 to Lys-95, Val-98 to Ser-140, Ser-147 to Val-186, and Lys-218 to Met-257. The segment at Asp-365–Lys-384 is disordered. Over residues Gln-367–Lys-384 the composition is skewed to basic and acidic residues.

This sequence belongs to the Symplekin family. In terms of assembly, interacts with Cpsf73 and Cpsf100 forming a core cleavage factor required for both polyadenylated and histone mRNA processing. Interacts with Slbp and Lsm11.

Its subcellular location is the nucleus. Functionally, component of a protein complex required for cotranscriptional processing of 3'-ends of polyadenylated and histone pre-mRNA. Involved in germline stem cell transit amplification, differentiation and mitosis-to-meiosis transition. The protein is Symplekin of Drosophila melanogaster (Fruit fly).